The chain runs to 117 residues: Immunoglobulin kappa variable 1D-16 (117 aa).

The first 22 residues, 1 to 22 (MDMRVLAQLLGLLLLCFPGARC), serve as a signal peptide directing secretion. The framework-1 stretch occupies residues 23 to 45 (DIQMTQSPSSLSASVGDRVTITC). Residues 24–117 (IQMTQSPSSL…YYCQQYNSYP (94 aa)) enclose the Ig-like domain. An intrachain disulfide couples Cys-45 to Cys-110. Positions 46–56 (RASQGISSWLA) are complementarity-determining-1. The framework-2 stretch occupies residues 57–71 (WYQQKPEKAPKSLIY). The interval 72–78 (AASSLQS) is complementarity-determining-2. The interval 79–110 (GVPSRFSGSGSGTDFTLTISSLQPEDFATYYC) is framework-3. A complementarity-determining-3 region spans residues 111-117 (QQYNSYP).

Immunoglobulins are composed of two identical heavy chains and two identical light chains; disulfide-linked.

It is found in the secreted. Its subcellular location is the cell membrane. Its function is as follows. V region of the variable domain of immunoglobulin light chains that participates in the antigen recognition. Immunoglobulins, also known as antibodies, are membrane-bound or secreted glycoproteins produced by B lymphocytes. In the recognition phase of humoral immunity, the membrane-bound immunoglobulins serve as receptors which, upon binding of a specific antigen, trigger the clonal expansion and differentiation of B lymphocytes into immunoglobulins-secreting plasma cells. Secreted immunoglobulins mediate the effector phase of humoral immunity, which results in the elimination of bound antigens. The antigen binding site is formed by the variable domain of one heavy chain, together with that of its associated light chain. Thus, each immunoglobulin has two antigen binding sites with remarkable affinity for a particular antigen. The variable domains are assembled by a process called V-(D)-J rearrangement and can then be subjected to somatic hypermutations which, after exposure to antigen and selection, allow affinity maturation for a particular antigen. In Homo sapiens (Human), this protein is Immunoglobulin kappa variable 1D-16.